The sequence spans 121 residues: Small ribosomal subunit protein uS13 (121 aa).

The interval 93–121 (RHLPVRGQNTKNNARTRKGPAVSIAGKKK) is disordered.

It belongs to the universal ribosomal protein uS13 family. Part of the 30S ribosomal subunit. Forms a loose heterodimer with protein S19. Forms two bridges to the 50S subunit in the 70S ribosome.

In terms of biological role, located at the top of the head of the 30S subunit, it contacts several helices of the 16S rRNA. In the 70S ribosome it contacts the 23S rRNA (bridge B1a) and protein L5 of the 50S subunit (bridge B1b), connecting the 2 subunits; these bridges are implicated in subunit movement. Contacts the tRNAs in the A and P-sites. The polypeptide is Small ribosomal subunit protein uS13 (Ligilactobacillus salivarius (strain UCC118) (Lactobacillus salivarius)).